Consider the following 137-residue polypeptide: Large ribosomal subunit protein uL16 (137 aa).

The protein belongs to the universal ribosomal protein uL16 family. In terms of assembly, part of the 50S ribosomal subunit.

Functionally, binds 23S rRNA and is also seen to make contacts with the A and possibly P site tRNAs. The protein is Large ribosomal subunit protein uL16 of Pseudomonas paraeruginosa (strain DSM 24068 / PA7) (Pseudomonas aeruginosa (strain PA7)).